The chain runs to 407 residues: Snake venom metalloproteinase ACLH (407 aa).

Positions 1–20 (MIQVLLVTLCLAAFPYQGSS) are cleaved as a signal peptide. The propeptide occupies 21–187 (IILESGNVND…PIKKASQLNL (167 aa)). The Peptidase M12B domain maps to 193 to 389 (RYVELVTVVD…ENPQCILNKP (197 aa)). Residues Glu196 and Asp280 each coordinate Ca(2+). Cystine bridges form between Cys304-Cys384, Cys344-Cys368, and Cys346-Cys351. His329 is a Zn(2+) binding site. Glu330 is a catalytic residue. The Zn(2+) site is built by His333 and His339. N-linked (GlcNAc...) asparagine glycosylation is present at Asn367. Ca(2+) is bound by residues Cys384 and Asn387.

This sequence belongs to the venom metalloproteinase (M12B) family. P-I subfamily. Monomer. Zn(2+) serves as cofactor. Post-translationally, contains sialic acid terminally alpha(2-6)-linked to galactose in a complex N-glycan chain. As to expression, expressed by the venom gland.

The protein resides in the secreted. Functionally, this zinc hemorrhagic metalloproteinase has fibrino(geno)lytic activities. It causes hemorrhage and has myonecrotic activity on both fiber types I and II. The recombinant enzyme, without post-translational modifications, also has proteolytic activity, but does not show any hemorrhagic activity. The polypeptide is Snake venom metalloproteinase ACLH (Agkistrodon contortrix laticinctus (Broad-banded copperhead)).